The primary structure comprises 553 residues: Phenylalanine--tRNA ligase beta subunit (553 aa).

Residues 273–349 (FNVRNIDIEV…RAFGYNNITP (77 aa)) enclose the B5 domain. 4 residues coordinate Mg(2+): D327, D333, D336, and D337.

Belongs to the phenylalanyl-tRNA synthetase beta subunit family. Type 2 subfamily. In terms of assembly, tetramer of two alpha and two beta subunits. Mg(2+) serves as cofactor.

Its subcellular location is the cytoplasm. The enzyme catalyses tRNA(Phe) + L-phenylalanine + ATP = L-phenylalanyl-tRNA(Phe) + AMP + diphosphate + H(+). The chain is Phenylalanine--tRNA ligase beta subunit from Methanocella arvoryzae (strain DSM 22066 / NBRC 105507 / MRE50).